The primary structure comprises 48 residues: Delta-stichotoxin-Hcr1e (48 aa).

Intrachain disulfides connect C3–C43, C5–C33, and C26–C44.

Belongs to the sea anemone sodium channel inhibitory toxin family. Type II subfamily.

It is found in the secreted. The protein localises to the nematocyst. Its function is as follows. Binds to site 3 of voltage-gated sodium channels and inhibits the inactivation process. This is Delta-stichotoxin-Hcr1e from Radianthus crispa (Leathery sea anemone).